Here is a 436-residue protein sequence, read N- to C-terminus: Putative F-box/FBD/LRR-repeat protein At5g44960 (436 aa).

The F-box domain occupies 4–50 (CDYINELPDSLLTQILLDLRTKDSVKTSVSSKRWRNLWLNVPGLDLF). LRR repeat units lie at residues 287–310 (ISSV…SKLG) and 397–420 (SAVL…SYKK). Residues 355 to 407 (EENIDFHEVPQCLISTLEYVHINKLMMMEQSGIKLVNYFIENSAVLKKLTLRF) enclose the FBD domain.

In Arabidopsis thaliana (Mouse-ear cress), this protein is Putative F-box/FBD/LRR-repeat protein At5g44960.